We begin with the raw amino-acid sequence, 459 residues long: Beta-glucosidase (459 aa).

Glutamate 171 (proton donor) is an active-site residue. Glutamate 359 (nucleophile) is an active-site residue.

It belongs to the glycosyl hydrolase 1 family.

The catalysed reaction is Hydrolysis of terminal, non-reducing beta-D-glucosyl residues with release of beta-D-glucose.. The chain is Beta-glucosidase (abg) from Agrobacterium sp. (strain ATCC 21400).